The sequence spans 330 residues: Cathepsin K (330 aa).

Positions 1 to 16 (MWGLKVVLLLPVMSSA) are cleaved as a signal peptide. Positions 17 to 115 (LYPEEILDTQ…TLYIPDWEGR (99 aa)) are cleaved as a propeptide — activation peptide. Asparagine 104 is a glycosylation site (N-linked (GlcNAc...) asparagine). 3 disulfide bridges follow: cysteine 137-cysteine 178, cysteine 171-cysteine 211, and cysteine 270-cysteine 319. Residue cysteine 140 is part of the active site. Catalysis depends on residues histidine 277 and asparagine 297.

Belongs to the peptidase C1 family. As to expression, expressed in the thyroid epithelial cells.

The protein resides in the lysosome. Its subcellular location is the secreted. It localises to the apical cell membrane. It catalyses the reaction Broad proteolytic activity. With small-molecule substrates and inhibitors, the major determinant of specificity is P2, which is preferably Leu, Met &gt; Phe, and not Arg.. In terms of biological role, thiol protease involved in osteoclastic bone resorption and may participate partially in the disorder of bone remodeling. Displays potent endoprotease activity against fibrinogen at acid pH. May play an important role in extracellular matrix degradation. Involved in the release of thyroid hormone thyroxine (T4) by limited proteolysis of TG/thyroglobulin in the thyroid follicle lumen. The protein is Cathepsin K (CTSK) of Sus scrofa (Pig).